Here is a 115-residue protein sequence, read N- to C-terminus: UPF0102 protein SYO3AOP1_0546 (115 aa).

It belongs to the UPF0102 family.

The sequence is that of UPF0102 protein SYO3AOP1_0546 from Sulfurihydrogenibium sp. (strain YO3AOP1).